Here is a 142-residue protein sequence, read N- to C-terminus: ATP synthase epsilon chain (142 aa).

Belongs to the ATPase epsilon chain family. F-type ATPases have 2 components, CF(1) - the catalytic core - and CF(0) - the membrane proton channel. CF(1) has five subunits: alpha(3), beta(3), gamma(1), delta(1), epsilon(1). CF(0) has three main subunits: a, b and c.

It localises to the cell inner membrane. Produces ATP from ADP in the presence of a proton gradient across the membrane. This chain is ATP synthase epsilon chain, found in Shewanella denitrificans (strain OS217 / ATCC BAA-1090 / DSM 15013).